Consider the following 225-residue polypeptide: MSGHDSGNAKRGRASFGAFVRKPVERDVVASAGEAAEQGSLEAVQAWPDDAVEVGAVVDAYGLKGWIKVATHADAGRGGDALLDARRWWLERGGERLSARILQSKTHGDTVVAHAAGVSDRDAALALRGFRVFVRREDFPELAADEFYWVDLIGLEVVNEQSVALGTVSGMIDNGVHSIMRVEYPAVGKDGQPTTDERLIPFVGVYVKTVDQAARRIVVDWEADY.

The PRC barrel domain occupies 144 to 225 (ADEFYWVDLI…RIVVDWEADY (82 aa)).

It belongs to the RimM family. Binds ribosomal protein uS19.

The protein localises to the cytoplasm. An accessory protein needed during the final step in the assembly of 30S ribosomal subunit, possibly for assembly of the head region. Essential for efficient processing of 16S rRNA. May be needed both before and after RbfA during the maturation of 16S rRNA. It has affinity for free ribosomal 30S subunits but not for 70S ribosomes. This Burkholderia ambifaria (strain MC40-6) protein is Ribosome maturation factor RimM.